Here is a 358-residue protein sequence, read N- to C-terminus: Trace amine-associated receptor 7c (358 aa).

Topologically, residues 1 to 47 are extracellular; sequence MATDDDSFPWDQDSILSRDLLSASSLQLCYENLNRSCVRSPYSPGSR. A glycan (N-linked (GlcNAc...) asparagine) is linked at N34. Intrachain disulfides connect C37-C201 and C120-C205. The chain crosses the membrane as a helical span at residues 48–68; it reads LILYAVFGFGAVLAVCGNLLV. Residues 69-83 lie on the Cytoplasmic side of the membrane; sequence MTSILHFRQLHSPAN. The helical transmembrane segment at 84-104 threads the bilayer; the sequence is FLVASLACADLLVGLTVMPFS. The Extracellular segment spans residues 105–125; it reads MVRSVEGCWYFGNTYCKFHSC. Residues 126-148 traverse the membrane as a helical segment; that stretch reads FEGSFCYSSLFHLCFISLDRYIA. At 149 to 166 the chain is on the cytoplasmic side; sequence VSDPLIYPTRFTASISGK. The chain crosses the membrane as a helical span at residues 167–187; the sequence is CITFSWLLSIIYSFSLLYTGA. The Extracellular segment spans residues 188–211; that stretch reads NEAGLEDLVSALTCVGGCQVAVNQ. The chain crosses the membrane as a helical span at residues 212-232; the sequence is SWVFINFLLFLVPALVMMTVY. Residues 233–274 are Cytoplasmic-facing; that stretch reads SKIFLIAKQQAQNIEKMSKQTARASESYKDRVAKRERKAAKT. A helical membrane pass occupies residues 275 to 295; the sequence is LGIAVAAFLLSWLPYFIDSII. Topologically, residues 296 to 309 are extracellular; sequence DAFLGFITPTYMYE. Residues 310-332 traverse the membrane as a helical segment; sequence ILVWIVYYNSAMNPLIYAFFYPW. The Cytoplasmic segment spans residues 333–358; that stretch reads FRKAIKLIVTGKILRENSSTINLFPE.

This sequence belongs to the G-protein coupled receptor 1 family.

The protein resides in the cell membrane. Functionally, olfactory receptor specific for N,N-dimethylalkylamines trace amines. Trace amine compounds are enriched in animal body fluids and act on trace amine-associated receptors (TAARs) to elicit both intraspecific and interspecific innate behaviors. Ligand-binding causes a conformation change that triggers signaling via G(s)-class of G alpha proteins (GNAL or GNAS). The protein is Trace amine-associated receptor 7c of Rattus norvegicus (Rat).